A 251-amino-acid chain; its full sequence is Putative (5-formylfuran-3-yl)methyl phosphate synthase (251 aa).

Lysine 29 serves as the catalytic Schiff-base intermediate with substrate. Lysine 87 (proton acceptor) is an active-site residue.

Belongs to the MfnB family.

The catalysed reaction is 2 D-glyceraldehyde 3-phosphate = 4-(hydroxymethyl)-2-furancarboxaldehyde phosphate + phosphate + 2 H2O. Catalyzes the formation of 4-(hydroxymethyl)-2-furancarboxaldehyde phosphate (4-HFC-P) from two molecules of glyceraldehyde-3-P (GA-3-P). The sequence is that of Putative (5-formylfuran-3-yl)methyl phosphate synthase from Kitasatospora aureofaciens (Streptomyces aureofaciens).